A 216-amino-acid polypeptide reads, in one-letter code: Probable nicotinate-nucleotide adenylyltransferase (216 aa).

This sequence belongs to the NadD family.

It carries out the reaction nicotinate beta-D-ribonucleotide + ATP + H(+) = deamido-NAD(+) + diphosphate. It functions in the pathway cofactor biosynthesis; NAD(+) biosynthesis; deamido-NAD(+) from nicotinate D-ribonucleotide: step 1/1. In terms of biological role, catalyzes the reversible adenylation of nicotinate mononucleotide (NaMN) to nicotinic acid adenine dinucleotide (NaAD). This chain is Probable nicotinate-nucleotide adenylyltransferase, found in Shewanella baltica (strain OS223).